Reading from the N-terminus, the 157-residue chain is Transcription elongation factor GreB (157 aa).

The stretch at 52-73 (KKLLREIDRRVRYLRKRLEDMR) forms a coiled coil.

The protein belongs to the GreA/GreB family. GreB subfamily.

Its function is as follows. Necessary for efficient RNA polymerase transcription elongation past template-encoded arresting sites. The arresting sites in DNA have the property of trapping a certain fraction of elongating RNA polymerases that pass through, resulting in locked ternary complexes. Cleavage of the nascent transcript by cleavage factors such as GreA or GreB allows the resumption of elongation from the new 3'terminus. GreB releases sequences of up to 9 nucleotides in length. This is Transcription elongation factor GreB from Pseudomonas syringae pv. tomato (strain ATCC BAA-871 / DC3000).